Consider the following 634-residue polypeptide: Chaperone protein HtpG (634 aa).

The interval 1–343 is a; substrate-binding; sequence MTEAENRVTL…SDSLPLNVSR (343 aa). The b stretch occupies residues 344 to 560; sequence EILQENKQLE…SYGMSRTMER (217 aa). A c region spans residues 561–634; sequence IMKSAGQNIP…KLNGLLQSLL (74 aa).

The protein belongs to the heat shock protein 90 family. In terms of assembly, homodimer.

The protein localises to the cytoplasm. Functionally, molecular chaperone. Has ATPase activity. The polypeptide is Chaperone protein HtpG (Methylococcus capsulatus (strain ATCC 33009 / NCIMB 11132 / Bath)).